Consider the following 452-residue polypeptide: tRNA modification GTPase MnmE (452 aa).

3 residues coordinate (6S)-5-formyl-5,6,7,8-tetrahydrofolate: Arg22, Glu79, and Lys119. The 161-residue stretch at 215-375 (GMKVVIAGRP…LRQHLKQSMG (161 aa)) folds into the TrmE-type G domain. Asn225 provides a ligand contact to K(+). Residues 225 to 230 (NAGKSS), 244 to 250 (TDIAGTT), 269 to 272 (DTAG), and 333 to 336 (NKAD) contribute to the GTP site. Mg(2+) is bound at residue Ser229. K(+)-binding residues include Thr244, Ile246, and Thr249. Residue Thr250 coordinates Mg(2+). Lys452 is a (6S)-5-formyl-5,6,7,8-tetrahydrofolate binding site.

It belongs to the TRAFAC class TrmE-Era-EngA-EngB-Septin-like GTPase superfamily. TrmE GTPase family. In terms of assembly, homodimer. Heterotetramer of two MnmE and two MnmG subunits. Requires K(+) as cofactor.

It is found in the cytoplasm. In terms of biological role, exhibits a very high intrinsic GTPase hydrolysis rate. Involved in the addition of a carboxymethylaminomethyl (cmnm) group at the wobble position (U34) of certain tRNAs, forming tRNA-cmnm(5)s(2)U34. In Histophilus somni (strain 2336) (Haemophilus somnus), this protein is tRNA modification GTPase MnmE.